We begin with the raw amino-acid sequence, 434 residues long: Fc receptor-like protein 6 (434 aa).

A signal peptide spans 1-19 (MLLWTAVLLFVPCVGKTVW). 3 consecutive Ig-like C2-type domains span residues 20-95 (LYLQ…QTFT), 111-197 (PPVL…PQLE), and 207-293 (PVLT…KKLS). Topologically, residues 20-307 (LYLQAWPNPV…QVLFTPASNW (288 aa)) are extracellular. Intrachain disulfides connect Cys39/Cys83, Cys132/Cys180, and Cys228/Cys276. The N-linked (GlcNAc...) asparagine glycan is linked to Asn65. N-linked (GlcNAc...) asparagine glycosylation is present at Asn273. Residues 308–328 (LVPWLPASLLGLMVIAAALLV) form a helical membrane-spanning segment. The Cytoplasmic segment spans residues 329 to 434 (YVRSWRKAGP…PLSDCEEVLC (106 aa)). The short motif at 369-374 (VVYSVV) is the ITIM motif element. A Phosphotyrosine modification is found at Tyr371.

In terms of assembly, interacts (tyrosine phosphorylated) with PTPN11. Interacts (tyrosine phosphorylated) with PTPN6, INPP5D, INPPL1 and GRB2. Interacts with class II MHC HLA-DR when the alpha chain is associated with a beta-1, beta-4 or a beta-5 but not a beta-3 chain. Phosphorylated on Tyr residues. Tyrosine phosphorylation induces association with phosphatase PTPN11, PTPN6, INPP5D, INPPL1 and GRB2. As to expression, expressed by cytolytic cells including NK cells, effector and effector-memory CD8(+) T-cells, and a subset of NKT cells (at protein level). Also expressed in gamma delta T cells and in a rare subset of effector CD4(+) T-cells (at protein level). Expressed in spleen, skin, peripheral blood leukocytes, liver, lung, bone marrow, small intestine and placenta. Expression among T-cells is greatly expanded in HIV-1 infected individuals, and includes not only effector and effector-memory CD8(+) T-cells but also populations of CD4(+) T-cells. Expression among CD8(+) T-cells and NK cells is expanded in individuals with chronic lymphocytic leukemia (CLL) but is reduced in PBMCs from patients with acute (AML), chronic myeloid leukemia (CML) and non-Hodgkin's lymphoma. Expression is higher in PBMCs and/or CD3(+) cells of patients with autoimmune diseases, such as rheumatoid arthritis (RA), systemic lupus erythematosus (SLE) and idiopathic thrombocytopenia purpura (ITP). In contrast, expression in CD3(+) cells from patients with lupus anticoagulans (LA) is higher.

The protein localises to the cell membrane. Its function is as follows. Acts as a MHC class II receptor. When stimulated on its own, does not play a role in cytokine production or the release of cytotoxic granules by NK cells and cytotoxic CD8(+) T cells. Does not act as an Fc receptor. The polypeptide is Fc receptor-like protein 6 (FCRL6) (Homo sapiens (Human)).